Here is a 427-residue protein sequence, read N- to C-terminus: Glutamate-1-semialdehyde 2,1-aminomutase (427 aa).

Lys265 is subject to N6-(pyridoxal phosphate)lysine.

Belongs to the class-III pyridoxal-phosphate-dependent aminotransferase family. HemL subfamily. As to quaternary structure, homodimer. Pyridoxal 5'-phosphate is required as a cofactor.

It localises to the cytoplasm. The enzyme catalyses (S)-4-amino-5-oxopentanoate = 5-aminolevulinate. It participates in porphyrin-containing compound metabolism; protoporphyrin-IX biosynthesis; 5-aminolevulinate from L-glutamyl-tRNA(Glu): step 2/2. The polypeptide is Glutamate-1-semialdehyde 2,1-aminomutase (Idiomarina loihiensis (strain ATCC BAA-735 / DSM 15497 / L2-TR)).